The primary structure comprises 287 residues: MPKINTSSSGWLADISLFYEKRGTNTKLVHREQVGPLMVQRPFYPETGIAHTYLLHPPGGVVGGDQLNINIHVSPQAHSLLTTPGATKFYRSSGATSSQTQNLTVESDGFLEWLPQENIFFPDSQAQLKTQVELHKNAHFIGWEMNCFGRPVLDEIFENGFVTGRTNIKVDDQLLLSESMYIDSIDEIKHAAGMRHYPMLGNLYIYPASEALEEKLRTLIDENFHEQPELFGSSNPICGITEIDGLLVIRYLGHQTEPMMACFSTLWQHTRQHWLGKLPEVPRIWAT.

Belongs to the UreD family. UreD, UreF and UreG form a complex that acts as a GTP-hydrolysis-dependent molecular chaperone, activating the urease apoprotein by helping to assemble the nickel containing metallocenter of UreC. The UreE protein probably delivers the nickel.

The protein localises to the cytoplasm. In terms of biological role, required for maturation of urease via the functional incorporation of the urease nickel metallocenter. This is Urease accessory protein UreD from Aliivibrio fischeri (strain ATCC 700601 / ES114) (Vibrio fischeri).